Here is a 400-residue protein sequence, read N- to C-terminus: Subtilisin-like protease 11 (400 aa).

The first 19 residues, 1–19 (MGLFKVIFTAVAALSAVDA), serve as a signal peptide directing secretion. Positions 20 to 117 (AELLSSAKSK…VEHDRHVYIS (98 aa)) are excised as a propeptide. Residues 35–116 (SYLVVMKDSV…FVEHDRHVYI (82 aa)) form the Inhibitor I9 domain. The 274-residue stretch at 127–400 (SWGLGRVSHR…NKLLYNGSGK (274 aa)) folds into the Peptidase S8 domain. The N-linked (GlcNAc...) asparagine glycan is linked to Asn-138. Asp-159 serves as the catalytic Charge relay system. Asn-181 carries an N-linked (GlcNAc...) asparagine glycan. Catalysis depends on His-191, which acts as the Charge relay system. 2 N-linked (GlcNAc...) asparagine glycosylation sites follow: Asn-252 and Asn-337. Catalysis depends on Ser-346, which acts as the Charge relay system. 2 N-linked (GlcNAc...) asparagine glycosylation sites follow: Asn-388 and Asn-396.

This sequence belongs to the peptidase S8 family.

The protein resides in the secreted. In terms of biological role, secreted subtilisin-like serine protease with keratinolytic activity that contributes to pathogenicity. This is Subtilisin-like protease 11 (SUB11) from Arthroderma benhamiae (strain ATCC MYA-4681 / CBS 112371) (Trichophyton mentagrophytes).